The primary structure comprises 74 residues: Kappa-scoloptoxin(07)-Ssm2f (74 aa).

The first 19 residues, 1–19 (MLVFYAILFVTVFSNTVMG), serve as a signal peptide directing secretion. Residues 20–41 (ATIDKPIPKPIFREAIEEMEVN) constitute a propeptide that is removed on maturation.

This sequence belongs to the scoloptoxin-07 family. In terms of processing, contains 3 disulfide bonds. Expressed by the venom gland.

Its subcellular location is the secreted. Its function is as follows. Inhibits voltage-gated potassium channels. The chain is Kappa-scoloptoxin(07)-Ssm2f from Scolopendra mutilans (Chinese red-headed centipede).